A 473-amino-acid chain; its full sequence is Probable aspartokinase (473 aa).

ACT domains lie at 323 to 392 (IFGA…FLNN) and 409 to 473 (VVGA…KTNS).

It belongs to the aspartokinase family.

It carries out the reaction L-aspartate + ATP = 4-phospho-L-aspartate + ADP. It participates in amino-acid biosynthesis; L-lysine biosynthesis via DAP pathway; (S)-tetrahydrodipicolinate from L-aspartate: step 1/4. The protein operates within amino-acid biosynthesis; L-methionine biosynthesis via de novo pathway; L-homoserine from L-aspartate: step 1/3. It functions in the pathway amino-acid biosynthesis; L-threonine biosynthesis; L-threonine from L-aspartate: step 1/5. This Methanocaldococcus jannaschii (strain ATCC 43067 / DSM 2661 / JAL-1 / JCM 10045 / NBRC 100440) (Methanococcus jannaschii) protein is Probable aspartokinase.